The primary structure comprises 292 residues: 4-hydroxy-tetrahydrodipicolinate synthase (292 aa).

Pyruvate is bound at residue T44. Y132 (proton donor/acceptor) is an active-site residue. K160 functions as the Schiff-base intermediate with substrate in the catalytic mechanism. I202 serves as a coordination point for pyruvate.

The protein belongs to the DapA family. In terms of assembly, homotetramer; dimer of dimers.

Its subcellular location is the cytoplasm. The enzyme catalyses L-aspartate 4-semialdehyde + pyruvate = (2S,4S)-4-hydroxy-2,3,4,5-tetrahydrodipicolinate + H2O + H(+). The protein operates within amino-acid biosynthesis; L-lysine biosynthesis via DAP pathway; (S)-tetrahydrodipicolinate from L-aspartate: step 3/4. Its function is as follows. Catalyzes the condensation of (S)-aspartate-beta-semialdehyde [(S)-ASA] and pyruvate to 4-hydroxy-tetrahydrodipicolinate (HTPA). The polypeptide is 4-hydroxy-tetrahydrodipicolinate synthase (Magnetococcus marinus (strain ATCC BAA-1437 / JCM 17883 / MC-1)).